A 188-amino-acid chain; its full sequence is Large ribosomal subunit protein bL35m (188 aa).

It belongs to the bacterial ribosomal protein bL35 family.

The protein localises to the mitochondrion. The polypeptide is Large ribosomal subunit protein bL35m (MRPL35) (Bos taurus (Bovine)).